The sequence spans 660 residues: Interferon-induced GTP-binding protein Mx1 (660 aa).

M1 carries the post-translational modification N-acetylmethionine. The span at 1–10 (MVHSEAKMTR) shows a compositional bias: basic and acidic residues. The interval 1–29 (MVHSEAKMTRPDSASASKQQLLNGNADIQ) is disordered. Residues 12-29 (DSASASKQQLLNGNADIQ) are compositionally biased toward polar residues. The 274-residue stretch at 67 to 340 (DLALPAIAVI…LITHISKSLP (274 aa)) folds into the Dynamin-type G domain. The G1 motif stretch occupies residues 77-84 (GDQSSGKS). 77–84 (GDQSSGKS) provides a ligand contact to GTP. The G2 motif stretch occupies residues 102–104 (VTR). A G3 motif region spans residues 178–181 (DLPG). Residues 178 to 182 (DLPGI) and 247 to 250 (TKPD) contribute to the GTP site. The G4 motif stretch occupies residues 247–250 (TKPD). Residues 279–282 (KCRG) form a G5 motif region. Residues 341–366 (LLENQIKESYQNLSDELQKYGTDIPE) form a bundle signaling element (BSE) region. The middle domain stretch occupies residues 366 to 533 (EDETEKTFFL…HFQMEKIVYC (168 aa)). The tract at residues 367-630 (DETEKTFFLI…RDTYDWLLKE (264 aa)) is stalk. The segment at 554-557 (KKKK) is critical for lipid-binding. The GED domain occupies 572-660 (MAEILEHLNA…ARRRLAKFPG (89 aa)).

Belongs to the TRAFAC class dynamin-like GTPase superfamily. Dynamin/Fzo/YdjA family. As to quaternary structure, homooligomer. Oligomerizes into multimeric filamentous or ring-like structures by virtue of its stalk domain. Oligomerization is critical for GTPase activity, protein stability, and recognition of viral target structures. Interacts with TRPC1, TRPC3, TRPC4, TRPC5, TRPC6 and TRPC7. Interacts with HSPA5. Interacts with TUBB/TUBB5. Interacts with DDX39A and DDX39B. In terms of processing, ISGylated.

The protein resides in the cytoplasm. Its subcellular location is the endoplasmic reticulum membrane. The protein localises to the perinuclear region. In terms of biological role, interferon-induced dynamin-like GTPase with antiviral activity. This Equus caballus (Horse) protein is Interferon-induced GTP-binding protein Mx1 (MX1).